A 250-amino-acid chain; its full sequence is 2,3-bisphosphoglycerate-dependent phosphoglycerate mutase (250 aa).

Residues arginine 10 to asparagine 17, threonine 23 to glycine 24, arginine 62, glutamate 89 to tyrosine 92, lysine 100, arginine 116 to arginine 117, and glycine 185 to asparagine 186 contribute to the substrate site. Histidine 11 acts as the Tele-phosphohistidine intermediate in catalysis. Catalysis depends on glutamate 89, which acts as the Proton donor/acceptor.

It belongs to the phosphoglycerate mutase family. BPG-dependent PGAM subfamily. As to quaternary structure, homodimer.

The enzyme catalyses (2R)-2-phosphoglycerate = (2R)-3-phosphoglycerate. The protein operates within carbohydrate degradation; glycolysis; pyruvate from D-glyceraldehyde 3-phosphate: step 3/5. Catalyzes the interconversion of 2-phosphoglycerate and 3-phosphoglycerate. In Cronobacter sakazakii (strain ATCC BAA-894) (Enterobacter sakazakii), this protein is 2,3-bisphosphoglycerate-dependent phosphoglycerate mutase.